The sequence spans 106 residues: Iron-sulfur cluster assembly protein CyaY (106 aa).

Belongs to the frataxin family.

Functionally, involved in iron-sulfur (Fe-S) cluster assembly. May act as a regulator of Fe-S biogenesis. The protein is Iron-sulfur cluster assembly protein CyaY of Salmonella heidelberg (strain SL476).